We begin with the raw amino-acid sequence, 326 residues long: Light-induced protein, chloroplastic (326 aa).

The transit peptide at 1 to 63 (MASISSLNQI…TNPKPKFTAQ (63 aa)) directs the protein to the chloroplast.

Belongs to the LIPC family. In terms of assembly, associates with the major light-harvesting antenna complex polypeptides of the PSII oxygen-evolving complex. In terms of tissue distribution, expressed at high levels in leaves and in the petals and anthers of flowers.

The protein localises to the plastid. It localises to the chloroplast thylakoid membrane. Functionally, required for normal plant growth. May be both photoprotective and play an ancillary role in photosynthesis. May structurally stabilize thylakoids during osmotic and oxidative stress. This Solanum demissum (Wild potato) protein is Light-induced protein, chloroplastic.